A 152-amino-acid chain; its full sequence is UPF0266 membrane protein YobD (152 aa).

The next 3 membrane-spanning stretches (helical) occupy residues 6 to 26 (LVLI…QFIM), 45 to 65 (IDSV…VTNH), and 67 to 87 (ALIT…IFWI).

Belongs to the UPF0266 family.

The protein resides in the cell inner membrane. This is UPF0266 membrane protein YobD from Escherichia coli O127:H6 (strain E2348/69 / EPEC).